Consider the following 211-residue polypeptide: FMN-dependent NADH:quinone oxidoreductase 2 (211 aa).

Residues Ser-10 and 17–19 contribute to the FMN site; that span reads SRS.

The protein belongs to the azoreductase type 1 family. Homodimer. It depends on FMN as a cofactor.

The enzyme catalyses 2 a quinone + NADH + H(+) = 2 a 1,4-benzosemiquinone + NAD(+). It catalyses the reaction N,N-dimethyl-1,4-phenylenediamine + anthranilate + 2 NAD(+) = 2-(4-dimethylaminophenyl)diazenylbenzoate + 2 NADH + 2 H(+). Its function is as follows. Quinone reductase that provides resistance to thiol-specific stress caused by electrophilic quinones. Also exhibits azoreductase activity. Catalyzes the reductive cleavage of the azo bond in aromatic azo compounds to the corresponding amines. In Listeria monocytogenes serovar 1/2a (strain ATCC BAA-679 / EGD-e), this protein is FMN-dependent NADH:quinone oxidoreductase 2.